The following is a 412-amino-acid chain: Adenosine receptor A2a (412 aa).

The Extracellular segment spans residues 1-7 (MPIMGSS). The chain crosses the membrane as a helical span at residues 8–32 (VYITVELAIAVLAILGNVLVCWAVW). Residues 33–42 (LNSNLQNVTN) are Cytoplasmic-facing. Residues 43–66 (YFVVSLAAADIAVGVLAIPFAITI) form a helical membrane-spanning segment. The Extracellular segment spans residues 67–77 (STGFCAACHGC). Intrachain disulfides connect Cys71/Cys159, Cys74/Cys146, and Cys77/Cys166. Residues 78–100 (LFIACFVLVLTQSSIFSLLAIAI) traverse the membrane as a helical segment. Residues 101-120 (DRYIAIRIPLRYNGLVTGTR) are Cytoplasmic-facing. A helical transmembrane segment spans residues 121–143 (AKGIIAICWVLSFAIGLTPMLGW). Topologically, residues 144-173 (NNCGQPKEGKNHSQGCGEGQVACLFEDVVP) are extracellular. N-linked (GlcNAc...) asparagine glycosylation occurs at Asn154. Adenosine is bound at residue Glu169. A helical membrane pass occupies residues 174–198 (MNYMVYFNFFACVLVPLLLMLGVYL). At 199–234 (RIFLAARRQLKQMESQPLPGERARSTLQKEVHAAKS) the chain is on the cytoplasmic side. The chain crosses the membrane as a helical span at residues 235-258 (LAIIVGLFALCWLPLHIINCFTFF). Adenosine is bound at residue Asn253. Cysteines 259 and 262 form a disulfide. The Extracellular segment spans residues 259–266 (CPDCSHAP). The helical transmembrane segment at 267-290 (LWLMYLAIVLSHTNSVVNPFIYAY) threads the bilayer. Ser277 and His278 together coordinate adenosine. The Cytoplasmic segment spans residues 291–412 (RIREFRQTFR…PLAQDGAGVS (122 aa)). Residues 391-412 (KGVCPEPPGLDDPLAQDGAGVS) are disordered.

Belongs to the G-protein coupled receptor 1 family. Interacts (via cytoplasmic C-terminal domain) with USP4; the interaction is direct. May interact with DRD4. Interacts with NECAB2. Interacts (via cytoplasmic C-terminal domain) with GAS2L2; interaction enhances receptor-mediated adenylyl cyclase activity. In terms of processing, ubiquitinated. Deubiquitinated by USP4; leading to stabilization and expression at the cell surface.

It localises to the cell membrane. Its function is as follows. Receptor for adenosine. The activity of this receptor is mediated by G proteins which activate adenylyl cyclase. The polypeptide is Adenosine receptor A2a (ADORA2A) (Homo sapiens (Human)).